The sequence spans 851 residues: Probable alpha,alpha-trehalose-phosphate synthase [UDP-forming] 7 (851 aa).

The residue at position 5 (serine 5) is a Phosphoserine. The residue at position 32 (threonine 32) is a Phosphothreonine. Residues 59-540 (DRMIIVANRL…SRSFLQDLER (482 aa)) are glycosyltransferase.

In the N-terminal section; belongs to the glycosyltransferase 20 family. The protein in the C-terminal section; belongs to the trehalose phosphatase family. In terms of assembly, binds to the phosphopeptide-binding site of GRF/14-3-3. Post-translationally, phosphorylated. In terms of tissue distribution, expressed in seedlings, leaves, roots, stems, flowers and siliques.

It catalyses the reaction D-glucose 6-phosphate + UDP-alpha-D-glucose = alpha,alpha-trehalose 6-phosphate + UDP + H(+). The protein is Probable alpha,alpha-trehalose-phosphate synthase [UDP-forming] 7 (TPS7) of Arabidopsis thaliana (Mouse-ear cress).